Consider the following 610-residue polypeptide: MITHAMEGSKTFNIPTFVLDENCNFIPDVLSRANAKFIKEVLIRDSYNAVCLANSFIPMATQTVEQILIIITKFKFSRSRDLLMSVFRLGVHINRFYAGKNQVKHMITMMKSLFDTEEAMRQLDRALMGLFVDARDNSYMPLIALSLHENGLPDSKFIKAVRLIQTTVNSFHNRPDADIEQYAEKLRAYNYLYKIPKYSLKEAVDIYSDNLKDLTIGVNKKPTLLFTSSDDAYLSHIYNDLLFLTSTWNMIYNCKKEIRRLNTWIKYEINSIMETAVLVGFQLPDLKETILDLAALISNMNLVSPDKELFPHYKLILAKLFEICIFATKANICILPSFIKGHLIEFEDVLKRSNDDEDLNYLLLKSRDSDDEYDEDKPPIQVDPGRVDNVLTDSDFFNVTPENAFSSIAIMPISYDKTIDVEDNEIQVLEVEMQSLSAVVYGAVASKYGLSLEQVIRKLNRNEGRTSSRASPSHSTSTVPYSPPQSDRSTPTSILRQRVPMRSNSRSSSVSFSQEDSNRSHYSDETNISDYSYPMADLELEDEEPMEDHPHSPQSTSSNNSMSRQSRALQNGQRRRAPTMVPSSQTRRQNNARPRRVARRLTEMMNDARL.

Disordered stretches follow at residues 462–530 (NEGR…NISD) and 543–610 (EEPM…DARL). A compositionally biased stretch (low complexity) spans 467-478 (SSRASPSHSTST). Polar residues predominate over residues 484-495 (PQSDRSTPTSIL). 2 stretches are compositionally biased toward low complexity: residues 503 to 515 (SNSRSSSVSFSQE) and 552 to 567 (SPQSTSSNNSMSRQSR). Over residues 581–592 (VPSSQTRRQNNA) the composition is skewed to polar residues. A compositionally biased stretch (basic and acidic residues) spans 600–610 (RLTEMMNDARL).

Belongs to the herpesviridae pp85 family. Post-translationally, phosphorylated.

The protein resides in the virion tegument. The protein localises to the host cytoplasm. This Homo sapiens (Human) protein is Phosphoprotein 85 (U14).